Here is a 137-residue protein sequence, read N- to C-terminus: Transcription antitermination protein NusB (137 aa).

Belongs to the NusB family.

Functionally, involved in transcription antitermination. Required for transcription of ribosomal RNA (rRNA) genes. Binds specifically to the boxA antiterminator sequence of the ribosomal RNA (rrn) operons. This chain is Transcription antitermination protein NusB, found in Haemophilus ducreyi (strain 35000HP / ATCC 700724).